Reading from the N-terminus, the 310-residue chain is Protoheme IX farnesyltransferase (310 aa).

9 consecutive transmembrane segments (helical) span residues 31–51, 52–72, 102–119, 123–145, 151–171, 179–199, 225–245, 248–268, and 281–301; these read VMSL…DSIH, PLIA…AGAM, ALSF…FMAL, ILAS…IWLK, NIVI…AAVS, IILF…IALF, ILIY…IGMN, IYLI…FSLF, and FTYS…TSTI.

It belongs to the UbiA prenyltransferase family. Protoheme IX farnesyltransferase subfamily.

Its subcellular location is the cell inner membrane. The enzyme catalyses heme b + (2E,6E)-farnesyl diphosphate + H2O = Fe(II)-heme o + diphosphate. Its pathway is porphyrin-containing compound metabolism; heme O biosynthesis; heme O from protoheme: step 1/1. Converts heme B (protoheme IX) to heme O by substitution of the vinyl group on carbon 2 of heme B porphyrin ring with a hydroxyethyl farnesyl side group. The chain is Protoheme IX farnesyltransferase from Rickettsia prowazekii (strain Madrid E).